The sequence spans 171 residues: Small ribosomal subunit protein uS5 (171 aa).

An S5 DRBM domain is found at 16 to 79 (LVERLVTVDR…EAAKRNMITV (64 aa)).

Belongs to the universal ribosomal protein uS5 family. Part of the 30S ribosomal subunit. Contacts proteins S4 and S8.

In terms of biological role, with S4 and S12 plays an important role in translational accuracy. Its function is as follows. Located at the back of the 30S subunit body where it stabilizes the conformation of the head with respect to the body. The chain is Small ribosomal subunit protein uS5 from Psychrobacter arcticus (strain DSM 17307 / VKM B-2377 / 273-4).